The following is a 625-amino-acid chain: Adenine deaminase 2 (625 aa).

It belongs to the metallo-dependent hydrolases superfamily. Adenine deaminase family. It depends on Mn(2+) as a cofactor.

It carries out the reaction adenine + H2O + H(+) = hypoxanthine + NH4(+). This Bradyrhizobium diazoefficiens (strain JCM 10833 / BCRC 13528 / IAM 13628 / NBRC 14792 / USDA 110) protein is Adenine deaminase 2.